Consider the following 591-residue polypeptide: Oxaloacetate decarboxylase alpha chain (591 aa).

The Pyruvate carboxyltransferase domain occupies 3–263 (IAITDVVLRD…DTGLDILKLE (261 aa)). The Biotinyl-binding domain occupies 518 to 591 (PAGAGTPVTA…SVGDTLMTLA (74 aa)). Lys557 carries the post-translational modification N6-biotinyllysine.

As to quaternary structure, composed of three chains (alpha, beta, and gamma). The cofactor is biotin.

The enzyme catalyses oxaloacetate + 2 Na(+)(in) + H(+) = pyruvate + 2 Na(+)(out) + CO2. Its function is as follows. Catalyzes the decarboxylation of oxaloacetate coupled to Na(+) translocation. This Salmonella typhi protein is Oxaloacetate decarboxylase alpha chain (oadA1).